Here is a 580-residue protein sequence, read N- to C-terminus: MKASQFFISTLKEAPADAEVVSHKLMTRAGMIKKLGAGIYSLMPMGLRVVRKVEQIVREEMNRAGAVELVMPVVQPAELWQETGRFESNGPELLRIKDRHGRDFVVQPTSEEVVTDIARQEIKSYKQLPKNLYQIQTKFRDERRPRFGLMRGREFIMKDAYSFDRDQASAKASYQVMAAAYRRIFDRFGLTYRAVAADSGAIGGDLSEEFQVIAATGEDAIVYCPGSDYAANMEKAEALAPSGPRAAPKQAFAKTATPGKSTCADVAELLQVPLQHTVKSLVLATDTLNKEGAIVKTQIWLLLLRGDHDMNEVKVGKLPGLAAFRFATVPEIEAHFGCQPGYLGPMGLRQPVQLVVDREVALMSDWICGANEPDFHITGVNWGRDLPEPALVADLRNVVAGDASPDGQGVLAIERGIEIGHVFYLGTKYSQAMNATFLDVNGKPQFMEMGCYGIGITRLPAAAIEQNHDERGIIWPDALAPFTVVLCPISPERFPDVKAASDKLYAELLAAGVDVILDDRGERPGAMFADWELIGVPHRVTIGDRGLKAGEVEYQHRRDSAATTVGVTAIFSLLQAKLKA.

The protein belongs to the class-II aminoacyl-tRNA synthetase family. ProS type 1 subfamily. Homodimer.

Its subcellular location is the cytoplasm. The catalysed reaction is tRNA(Pro) + L-proline + ATP = L-prolyl-tRNA(Pro) + AMP + diphosphate. Its function is as follows. Catalyzes the attachment of proline to tRNA(Pro) in a two-step reaction: proline is first activated by ATP to form Pro-AMP and then transferred to the acceptor end of tRNA(Pro). As ProRS can inadvertently accommodate and process non-cognate amino acids such as alanine and cysteine, to avoid such errors it has two additional distinct editing activities against alanine. One activity is designated as 'pretransfer' editing and involves the tRNA(Pro)-independent hydrolysis of activated Ala-AMP. The other activity is designated 'posttransfer' editing and involves deacylation of mischarged Ala-tRNA(Pro). The misacylated Cys-tRNA(Pro) is not edited by ProRS. The polypeptide is Proline--tRNA ligase (Albidiferax ferrireducens (strain ATCC BAA-621 / DSM 15236 / T118) (Rhodoferax ferrireducens)).